Consider the following 121-residue polypeptide: Insertion element IS406 uncharacterized 13.3 kDa protein (121 aa).

The chain is Insertion element IS406 uncharacterized 13.3 kDa protein from Burkholderia multivorans (strain ATCC 17616 / 249).